A 611-amino-acid chain; its full sequence is Elongation factor 4 1 (611 aa).

A tr-type G domain is found at 11 to 193; the sequence is QHIRNFSIVA…QIVHKIPAPQ (183 aa). Residues 23–28 and 140–143 each bind GTP; these read DHGKST and NKID.

The protein belongs to the TRAFAC class translation factor GTPase superfamily. Classic translation factor GTPase family. LepA subfamily.

The protein resides in the cell membrane. It catalyses the reaction GTP + H2O = GDP + phosphate + H(+). Required for accurate and efficient protein synthesis under certain stress conditions. May act as a fidelity factor of the translation reaction, by catalyzing a one-codon backward translocation of tRNAs on improperly translocated ribosomes. Back-translocation proceeds from a post-translocation (POST) complex to a pre-translocation (PRE) complex, thus giving elongation factor G a second chance to translocate the tRNAs correctly. Binds to ribosomes in a GTP-dependent manner. The polypeptide is Elongation factor 4 1 (Lactiplantibacillus plantarum (strain ATCC BAA-793 / NCIMB 8826 / WCFS1) (Lactobacillus plantarum)).